Reading from the N-terminus, the 330-residue chain is 4-hydroxythreonine-4-phosphate dehydrogenase (330 aa).

Substrate-binding residues include His-135 and Thr-136. Positions 165, 210, and 266 each coordinate a divalent metal cation. Substrate contacts are provided by Lys-274, Asn-283, and Arg-292.

This sequence belongs to the PdxA family. Homodimer. It depends on Zn(2+) as a cofactor. Requires Mg(2+) as cofactor. Co(2+) serves as cofactor.

Its subcellular location is the cytoplasm. The enzyme catalyses 4-(phosphooxy)-L-threonine + NAD(+) = 3-amino-2-oxopropyl phosphate + CO2 + NADH. The protein operates within cofactor biosynthesis; pyridoxine 5'-phosphate biosynthesis; pyridoxine 5'-phosphate from D-erythrose 4-phosphate: step 4/5. Catalyzes the NAD(P)-dependent oxidation of 4-(phosphooxy)-L-threonine (HTP) into 2-amino-3-oxo-4-(phosphooxy)butyric acid which spontaneously decarboxylates to form 3-amino-2-oxopropyl phosphate (AHAP). This chain is 4-hydroxythreonine-4-phosphate dehydrogenase, found in Vibrio cholerae serotype O1 (strain ATCC 39315 / El Tor Inaba N16961).